The sequence spans 479 residues: Sulfate adenylyltransferase subunit 1 (479 aa).

Residues 25–239 (KSLLRFLTCG…EVLETVDIQR (215 aa)) form the tr-type G domain. Residues 34–41 (GSVDDGKS) form a G1 region. 34–41 (GSVDDGKS) is a GTP binding site. The tract at residues 92 to 96 (GITID) is G2. Residues 113–116 (DTPG) form a G3 region. Residues 113–117 (DTPGH) and 168–171 (NKMD) contribute to the GTP site. The tract at residues 168–171 (NKMD) is G4. The G5 stretch occupies residues 206 to 208 (SAL).

The protein belongs to the TRAFAC class translation factor GTPase superfamily. Classic translation factor GTPase family. CysN/NodQ subfamily. As to quaternary structure, heterodimer composed of CysD, the smaller subunit, and CysN.

It catalyses the reaction sulfate + ATP + H(+) = adenosine 5'-phosphosulfate + diphosphate. It functions in the pathway sulfur metabolism; hydrogen sulfide biosynthesis; sulfite from sulfate: step 1/3. With CysD forms the ATP sulfurylase (ATPS) that catalyzes the adenylation of sulfate producing adenosine 5'-phosphosulfate (APS) and diphosphate, the first enzymatic step in sulfur assimilation pathway. APS synthesis involves the formation of a high-energy phosphoric-sulfuric acid anhydride bond driven by GTP hydrolysis by CysN coupled to ATP hydrolysis by CysD. This is Sulfate adenylyltransferase subunit 1 from Salmonella agona (strain SL483).